The primary structure comprises 80 residues: Late cornified envelope protein 6A (80 aa).

Polar residues predominate over residues 1–10 (MSQQKQQSWK). Disordered regions lie at residues 1 to 21 (MSQQ…SPPQ) and 35 to 60 (GAPH…ARQK).

This sequence belongs to the LCE family.

Its function is as follows. Precursors of the cornified envelope of the stratum corneum. This is Late cornified envelope protein 6A (LCE6A) from Homo sapiens (Human).